The following is a 118-amino-acid chain: UPF0102 protein DICTH_1420 (118 aa).

This sequence belongs to the UPF0102 family.

In Dictyoglomus thermophilum (strain ATCC 35947 / DSM 3960 / H-6-12), this protein is UPF0102 protein DICTH_1420.